The primary structure comprises 159 residues: Ribosomal RNA large subunit methyltransferase H (159 aa).

Residues Leu-76, Gly-108, and 127-132 (FGKMTL) each bind S-adenosyl-L-methionine.

Belongs to the RNA methyltransferase RlmH family. Homodimer.

It localises to the cytoplasm. The enzyme catalyses pseudouridine(1915) in 23S rRNA + S-adenosyl-L-methionine = N(3)-methylpseudouridine(1915) in 23S rRNA + S-adenosyl-L-homocysteine + H(+). Functionally, specifically methylates the pseudouridine at position 1915 (m3Psi1915) in 23S rRNA. This chain is Ribosomal RNA large subunit methyltransferase H, found in Lysinibacillus sphaericus (strain C3-41).